A 591-amino-acid chain; its full sequence is MCAASASPDNLVFHMKNEMRNIKYKPVDYQQLRALTEAKKLASASAKLKIRKAMLTSKLSKEQTLIKQHKQVWWQEYQRLNEVRCKMESEIKSLLNEENIGNECLCDLTNFEQELSEQQCTYLKNVINPIQQLRADLKYRQHHTLQHSHPHIEFNSMKVLEEVDFVKKQLKTVFERLRLEQQRIENDLSDWSIKILDHSLEEKTNPLSELPIELESLECPYPDLKSSILSEFYKFTQKYQKKLQDFNLQLEDIYRNCQLSEEDHWIYQAILDQYPGDLFGRRTLYLDMLQRYFPHKSRHDLVEHEKYCDQYRFAIEQQNILISNWNKNKKDFIQKAVLTLTEACATHEMESMLAKDKKKQQELCADLKAKVRQWRAHQEEVARLEMEISARRREKEEEKEKLWKKKELLQRAEKKKKIKKYWAKKKQKWQEMEMRDLQRLEELKKLIAEQSLKDRERVKYRQELLERRLMEKKEVALQEAHEDKERARRLEALRKQVAVVAQFDPVRMMSDTMASKARMGIEIEEEFILQKPLFTLNTYNEQQIISDPRLRFELALREAGLHRTLYAKEILPKISPQKPPRKDMESTVFKI.

3 coiled-coil regions span residues 166–195, 352–417, and 466–498; these read VKKQLKTVFERLRLEQQRIENDLSDWSIKI, MLAK…KKKK, and ERRLMEKKEVALQEAHEDKERARRLEALRKQVA.

This is Coiled-coil domain-containing protein 148 (CCDC148) from Homo sapiens (Human).